The chain runs to 489 residues: Aspartate/glutamate permease AcaP (489 aa).

12 consecutive transmembrane segments (helical) span residues 6-26 (IRWF…GNVV), 36-56 (VVTS…LIVG), 91-111 (VVHI…FGWV), 122-142 (MSMT…LWLS), 152-172 (IGGL…VMAI), 195-215 (IPKF…AVGG), 238-258 (FLLA…MGMI), 290-310 (LMIV…AFSI), 342-362 (GYTL…LGIG), 373-393 (NLNS…FIML), 413-433 (AMIA…LGMV), and 449-469 (LASN…LPFI).

This sequence belongs to the amino acid-polyamine-organocation (APC) superfamily. Glutamate:GABA antiporter (GGA) (TC 2.A.3.7) family.

The protein localises to the cell membrane. Its function is as follows. Involved in aspartate and glutamate uptake. Plays no significant role in the excretion of accumulated glutamate. In Lactococcus lactis subsp. cremoris (strain MG1363), this protein is Aspartate/glutamate permease AcaP.